Reading from the N-terminus, the 150-residue chain is SsrA-binding protein (150 aa).

Belongs to the SmpB family.

The protein localises to the cytoplasm. In terms of biological role, required for rescue of stalled ribosomes mediated by trans-translation. Binds to transfer-messenger RNA (tmRNA), required for stable association of tmRNA with ribosomes. tmRNA and SmpB together mimic tRNA shape, replacing the anticodon stem-loop with SmpB. tmRNA is encoded by the ssrA gene; the 2 termini fold to resemble tRNA(Ala) and it encodes a 'tag peptide', a short internal open reading frame. During trans-translation Ala-aminoacylated tmRNA acts like a tRNA, entering the A-site of stalled ribosomes, displacing the stalled mRNA. The ribosome then switches to translate the ORF on the tmRNA; the nascent peptide is terminated with the 'tag peptide' encoded by the tmRNA and targeted for degradation. The ribosome is freed to recommence translation, which seems to be the essential function of trans-translation. The polypeptide is SsrA-binding protein (Flavobacterium psychrophilum (strain ATCC 49511 / DSM 21280 / CIP 103535 / JIP02/86)).